Here is a 129-residue protein sequence, read N- to C-terminus: Probable tautomerase YrdN (129 aa).

The active-site Proton acceptor; via imino nitrogen is proline 2.

It belongs to the 4-oxalocrotonate tautomerase family.

Putative target of GltR. The protein is Probable tautomerase YrdN (yrdN) of Bacillus subtilis (strain 168).